Reading from the N-terminus, the 281-residue chain is Bifunctional protein FolD (281 aa).

NADP(+) contacts are provided by residues 164–166, serine 189, and threonine 230; that span reads GRS.

This sequence belongs to the tetrahydrofolate dehydrogenase/cyclohydrolase family. In terms of assembly, homodimer.

The catalysed reaction is (6R)-5,10-methylene-5,6,7,8-tetrahydrofolate + NADP(+) = (6R)-5,10-methenyltetrahydrofolate + NADPH. The enzyme catalyses (6R)-5,10-methenyltetrahydrofolate + H2O = (6R)-10-formyltetrahydrofolate + H(+). It participates in one-carbon metabolism; tetrahydrofolate interconversion. Functionally, catalyzes the oxidation of 5,10-methylenetetrahydrofolate to 5,10-methenyltetrahydrofolate and then the hydrolysis of 5,10-methenyltetrahydrofolate to 10-formyltetrahydrofolate. This chain is Bifunctional protein FolD, found in Dictyoglomus turgidum (strain DSM 6724 / Z-1310).